The following is a 224-amino-acid chain: UPF0758 protein PLES_57141 (224 aa).

The 123-residue stretch at 102-224 folds into the MPN domain; the sequence is ILESPQAVRD…PLSLAEYGWL (123 aa). The Zn(2+) site is built by histidine 173, histidine 175, and aspartate 186. The JAMM motif motif lies at 173-186; it reads HNHPSGDARPSLAD.

This sequence belongs to the UPF0758 family.

This Pseudomonas aeruginosa (strain LESB58) protein is UPF0758 protein PLES_57141.